A 249-amino-acid chain; its full sequence is 2,3-bisphosphoglycerate-dependent phosphoglycerate mutase (249 aa).

Residues 9–16, 22–23, R61, 88–91, K99, 115–116, and 184–185 each bind substrate; these read RHGQSQWN, TG, ERHY, RR, and GN. H10 serves as the catalytic Tele-phosphohistidine intermediate. Residue E88 is the Proton donor/acceptor of the active site.

Belongs to the phosphoglycerate mutase family. BPG-dependent PGAM subfamily. As to quaternary structure, homodimer.

It catalyses the reaction (2R)-2-phosphoglycerate = (2R)-3-phosphoglycerate. It participates in carbohydrate degradation; glycolysis; pyruvate from D-glyceraldehyde 3-phosphate: step 3/5. Functionally, catalyzes the interconversion of 2-phosphoglycerate and 3-phosphoglycerate. This Xanthomonas axonopodis pv. citri (strain 306) protein is 2,3-bisphosphoglycerate-dependent phosphoglycerate mutase.